Reading from the N-terminus, the 121-residue chain is Neuromedin-B (121 aa).

An N-terminal signal peptide occupies residues Met1 to Val24. Residue Met56 is modified to Methionine amide. Positions Ser60 to Lys121 are excised as a propeptide.

The protein belongs to the bombesin/neuromedin-B/ranatensin family.

It is found in the secreted. It localises to the cell projection. The protein localises to the neuron projection. Its function is as follows. Stimulates smooth muscle contraction. Induces sighing by acting directly on the pre-Botzinger complex, a cluster of several thousand neurons in the ventrolateral medulla responsible for inspiration during respiratory activity. Contributes to the induction of sneezing following exposure to chemical irritants or allergens which causes release of NMB by nasal sensory neurons and activation of NMBR-expressing neurons in the sneeze-evoking region of the brainstem. These in turn activate neurons of the caudal ventral respiratory group, giving rise to the sneezing response. Contributes to induction of acute itch, possibly through activation of the NMBR receptor on dorsal root ganglion neurons. Increases expression of NMBR and steroidogenic mediators STAR, CYP11A1 and HSD3B1 in Leydig cells, induces secretion of testosterone by Leydig cells and also promotes Leydig cell proliferation. Plays a role in the innate immune response to influenza A virus infection by enhancing interferon alpha expression and reducing expression of IL6. Plays a role in CSF1-induced proliferation of osteoclast precursors by contributing to the positive regulation of the expression of the CSF1 receptor CSF1R. The polypeptide is Neuromedin-B (NMB) (Homo sapiens (Human)).